Here is a 401-residue protein sequence, read N- to C-terminus: Renin-2 (401 aa).

The first 25 residues, 1-25 (MDRRRMPLWALLLLWSPCTFSLPTG), serve as a signal peptide directing secretion. The propeptide at 26-63 (TTFERIPLKKMPSVREILEERGVDMTRLSAEWDVFTKR) is activation peptide. The Peptidase A1 domain occupies 83–398 (YYGEIGIGTP…DRHNNRIGFA (316 aa)). The active site involves aspartate 101. Cystine bridges form between cysteine 114-cysteine 121 and cysteine 277-cysteine 281. Aspartate 286 is a catalytic residue. A disulfide bridge links cysteine 320 with cysteine 357.

The protein belongs to the peptidase A1 family. Dimer of a heavy chain and a light chain joined by a disulfide bond. Submandibular gland.

Its subcellular location is the secreted. It catalyses the reaction Cleavage of Leu-|-Xaa bond in angiotensinogen to generate angiotensin I.. In terms of biological role, renin is a highly specific endopeptidase, related to pepsin, whose only known function is to generate angiotensin I from angiotensinogen in the plasma, initiating a cascade of reactions that produce an elevation of blood pressure and increased sodium retention by the kidney. The sequence is that of Renin-2 from Mus musculus (Mouse).